Reading from the N-terminus, the 708-residue chain is Retrotransposon-derived protein PEG10 (708 aa).

A coiled-coil region spans residues 1 to 50; that stretch reads MTERRRDELSEEINNLREKVMKQSEENNNLQSQVQKLTEENTTLREQVEP. The segment at 21 to 74 is disordered; that stretch reads MKQSEENNNLQSQVQKLTEENTTLREQVEPTPEDEDDDIELRGAAAAAAPPPPI. A compositionally biased stretch (polar residues) spans 26–36; sequence ENNNLQSQVQK. The segment covering 37–48 has biased composition (basic and acidic residues); it reads LTEENTTLREQV. The tract at residues 76 to 275 is necessary for interaction with ACVRL1; sequence EECPEDLPEK…HQVDPTEPVG (200 aa). The segment at 293–310 adopts a CCHC-type zinc-finger fold; sequence NLCLYCGTGGHYADNCPA. The segment at 310–344 is disordered; sequence AKASKSSPAGKLPGPAVEGPSATGPEIIRSPQDDA. Residues Lys311 and Lys314 each participate in a glycyl lysine isopeptide (Lys-Gly) (interchain with G-Cter in ubiquitin) cross-link. Residues Ser316 and Leu321 each carry the phosphoserine modification. Arg507, Arg598, and Arg611 each carry omega-N-methylarginine. A disordered region spans residues 683–708; that stretch reads PVPQYPPPQPPPPPPPPPPPPSYSTL.

In terms of assembly, homooligomer; homooligomerizes into virion-like capsids. Interacts with ACVRL1. Interacts with SIAH1 and SIAH2. Undergoes proteolytic cleavage. In terms of tissue distribution, expressed in the cytotrophoblast layer but not in the overlying syncytiotrophoblast of the placenta. Expressed in prostate and breast carcinomas but not in normal breast and prostate epithelial cells. Expressed in the Hep-G2 cell line (at protein level). Expressed in brain, liver, spleen, kidney, thymus, lung, ovary, testis, reactive lymph node, skeletal muscle, adipose tissue and placenta. Expressed in pancreatic and hepatocellular carcinomas (HCC).

The protein resides in the extracellular vesicle membrane. The protein localises to the cytoplasm. Its subcellular location is the nucleus. Its function is as follows. Retrotransposon-derived protein that binds its own mRNA and self-assembles into virion-like capsids. Forms virion-like extracellular vesicles that encapsulate their own mRNA and are released from cells, enabling intercellular transfer of PEG10 mRNA. Binds its own mRNA in the 5'-UTR region, in the region near the boundary between the nucleocapsid (NC) and protease (PRO) coding sequences and in the beginning of the 3'-UTR region. Involved in placenta formation: required for trophoblast stem cells differentiation. Involved at the immediate early stage of adipocyte differentiation. Overexpressed in many cancers and enhances tumor progression: promotes cell proliferation by driving cell cycle progression from G0/G1. Enhances cancer progression by inhibiting the TGF-beta signaling, possibly via interaction with the TGF-beta receptor ACVRL1. May bind to the 5'-GCCTGTCTTT-3' DNA sequence of the MB1 domain in the myelin basic protein (MBP) promoter; additional evidences are however required to confirm this result. This chain is Retrotransposon-derived protein PEG10, found in Homo sapiens (Human).